The following is a 217-amino-acid chain: Probable GTP-binding protein EngB (217 aa).

Residues 44 to 217 (DRVEVCFAGR…TLRSIIAHLE (174 aa)) form the EngB-type G domain. Residues 52–59 (GRSNVGKS), 79–83 (GRTQE), 97–100 (DLPG), 164–167 (TKAD), and 198–200 (TSS) contribute to the GTP site. Mg(2+) contacts are provided by Ser-59 and Thr-81.

The protein belongs to the TRAFAC class TrmE-Era-EngA-EngB-Septin-like GTPase superfamily. EngB GTPase family. It depends on Mg(2+) as a cofactor.

Its function is as follows. Necessary for normal cell division and for the maintenance of normal septation. The sequence is that of Probable GTP-binding protein EngB from Ruegeria pomeroyi (strain ATCC 700808 / DSM 15171 / DSS-3) (Silicibacter pomeroyi).